The sequence spans 522 residues: Protein nucleotidyltransferase YdiU (522 aa).

The ATP site is built by Gly109, Gly111, Arg112, Lys132, Asp144, Gly145, Arg195, and Arg202. Asp271 functions as the Proton acceptor in the catalytic mechanism. Residues Asn272 and Asp281 each contribute to the Mg(2+) site. Asp281 lines the ATP pocket.

It belongs to the SELO family. Requires Mg(2+) as cofactor. It depends on Mn(2+) as a cofactor.

It catalyses the reaction L-seryl-[protein] + ATP = 3-O-(5'-adenylyl)-L-seryl-[protein] + diphosphate. The enzyme catalyses L-threonyl-[protein] + ATP = 3-O-(5'-adenylyl)-L-threonyl-[protein] + diphosphate. The catalysed reaction is L-tyrosyl-[protein] + ATP = O-(5'-adenylyl)-L-tyrosyl-[protein] + diphosphate. It carries out the reaction L-histidyl-[protein] + UTP = N(tele)-(5'-uridylyl)-L-histidyl-[protein] + diphosphate. It catalyses the reaction L-seryl-[protein] + UTP = O-(5'-uridylyl)-L-seryl-[protein] + diphosphate. The enzyme catalyses L-tyrosyl-[protein] + UTP = O-(5'-uridylyl)-L-tyrosyl-[protein] + diphosphate. Functionally, nucleotidyltransferase involved in the post-translational modification of proteins. It can catalyze the addition of adenosine monophosphate (AMP) or uridine monophosphate (UMP) to a protein, resulting in modifications known as AMPylation and UMPylation. The chain is Protein nucleotidyltransferase YdiU from Burkholderia ambifaria (strain ATCC BAA-244 / DSM 16087 / CCUG 44356 / LMG 19182 / AMMD) (Burkholderia cepacia (strain AMMD)).